Reading from the N-terminus, the 675-residue chain is Potassium-transporting ATPase ATP-binding subunit (675 aa).

4 helical membrane-spanning segments follow: residues 34 to 54, 65 to 85, 216 to 236, and 245 to 265; these read IMFV…FPDI, LITI…SEAF, IALF…IVTL, and LILP…TTIG. The active-site 4-aspartylphosphate intermediate is the aspartate 304. Residues aspartate 341, glutamate 345, 372–379, and lysine 390 contribute to the ATP site; that span reads FTAETRMS. Mg(2+)-binding residues include aspartate 513 and aspartate 517. The next 3 helical transmembrane spans lie at 569–591, 611–631, and 644–664; these read ALTT…ALMM, AIIS…PIAM, and IFIN…FLGI.

It belongs to the cation transport ATPase (P-type) (TC 3.A.3) family. Type IA subfamily. As to quaternary structure, the system is composed of three essential subunits: KdpA, KdpB and KdpC.

The protein localises to the cell membrane. It catalyses the reaction K(+)(out) + ATP + H2O = K(+)(in) + ADP + phosphate + H(+). Its function is as follows. Part of the high-affinity ATP-driven potassium transport (or Kdp) system, which catalyzes the hydrolysis of ATP coupled with the electrogenic transport of potassium into the cytoplasm. This subunit is responsible for energy coupling to the transport system and for the release of the potassium ions to the cytoplasm. The polypeptide is Potassium-transporting ATPase ATP-binding subunit (Staphylococcus aureus (strain bovine RF122 / ET3-1)).